Consider the following 225-residue polypeptide: Small ribosomal subunit protein uS3 (225 aa).

The KH type-2 domain maps to 18 to 87 (VDEYLAKQFY…NPQITVTSVE (70 aa)).

This sequence belongs to the universal ribosomal protein uS3 family. As to quaternary structure, part of the 30S ribosomal subunit.

Functionally, binds the lower part of the 30S subunit head. This Sulfurisphaera tokodaii (strain DSM 16993 / JCM 10545 / NBRC 100140 / 7) (Sulfolobus tokodaii) protein is Small ribosomal subunit protein uS3.